The sequence spans 304 residues: Bifunctional protein FolD (304 aa).

Residues 167 to 169, S192, and I233 each bind NADP(+); that span reads GRS.

Belongs to the tetrahydrofolate dehydrogenase/cyclohydrolase family. As to quaternary structure, homodimer.

The enzyme catalyses (6R)-5,10-methylene-5,6,7,8-tetrahydrofolate + NADP(+) = (6R)-5,10-methenyltetrahydrofolate + NADPH. The catalysed reaction is (6R)-5,10-methenyltetrahydrofolate + H2O = (6R)-10-formyltetrahydrofolate + H(+). It participates in one-carbon metabolism; tetrahydrofolate interconversion. Its function is as follows. Catalyzes the oxidation of 5,10-methylenetetrahydrofolate to 5,10-methenyltetrahydrofolate and then the hydrolysis of 5,10-methenyltetrahydrofolate to 10-formyltetrahydrofolate. The polypeptide is Bifunctional protein FolD (Rhodospirillum centenum (strain ATCC 51521 / SW)).